A 606-amino-acid chain; its full sequence is Threonine--tRNA ligase (606 aa).

A catalytic region spans residues 212–503 (DHRKLGVEMK…LLEHTAGELP (292 aa)). Zn(2+) contacts are provided by Cys-304, His-355, and His-480.

The protein belongs to the class-II aminoacyl-tRNA synthetase family. In terms of assembly, homodimer. Requires Zn(2+) as cofactor.

The protein localises to the cytoplasm. It carries out the reaction tRNA(Thr) + L-threonine + ATP = L-threonyl-tRNA(Thr) + AMP + diphosphate + H(+). Its function is as follows. Catalyzes the attachment of threonine to tRNA(Thr) in a two-step reaction: L-threonine is first activated by ATP to form Thr-AMP and then transferred to the acceptor end of tRNA(Thr). Also edits incorrectly charged L-seryl-tRNA(Thr). The polypeptide is Threonine--tRNA ligase (Campylobacter concisus (strain 13826)).